A 494-amino-acid polypeptide reads, in one-letter code: Alpha-amylase-related protein (494 aa).

An N-terminal signal peptide occupies residues 1 to 20 (MFKFASAVILCVVAASSTLA). Gln21 bears the Pyrrolidone carboxylic acid mark. Cys48 and Cys104 form a disulfide bridge. Ca(2+) contacts are provided by Asn118, Gln169, and Asp178. A disulfide bond links Cys157 and Cys171. Arg206 is a chloride binding site. Asp208 acts as the Nucleophile in catalysis. A Ca(2+)-binding site is contributed by His212. Glu245 acts as the Proton donor in catalysis. Residues Asn308 and Arg343 each coordinate chloride. Cystine bridges form between Cys376–Cys382, Cys418–Cys441, and Cys448–Cys460.

This sequence belongs to the glycosyl hydrolase 13 family. Monomer. It depends on Ca(2+) as a cofactor. Chloride is required as a cofactor.

It is found in the secreted. It carries out the reaction Endohydrolysis of (1-&gt;4)-alpha-D-glucosidic linkages in polysaccharides containing three or more (1-&gt;4)-alpha-linked D-glucose units.. This chain is Alpha-amylase-related protein (Amyrel), found in Drosophila varians (Fruit fly).